The following is a 519-amino-acid chain: Cell adhesion molecule CEACAM1 (519 aa).

A signal peptide spans Met-1–Ala-34. Gln-35 is modified (pyrrolidone carboxylic acid). The Extracellular segment spans residues Gln-35–Ala-425. The required for homophilic binding stretch occupies residues Asp-39 to Pro-142. The Ig-like V-type domain occupies Pro-42 to Val-140. N-linked (GlcNAc...) asparagine glycosylation is found at Asn-87, Asn-104, Asn-113, Asn-148, Asn-152, Asn-173, Asn-197, Asn-224, Asn-256, Asn-288, Asn-292, Asn-302, Asn-315, and Asn-331. 3 Ig-like C2-type domains span residues Pro-147–Asp-232, Pro-237–Thr-317, and Pro-325–Ser-403. Cys-167 and Cys-215 are oxidised to a cystine. Residues Cys-259 and Cys-299 are joined by a disulfide bond. The cysteines at positions 344 and 392 are disulfide-linked. The N-linked (GlcNAc...) asparagine; atypical glycan is linked to Asn-374. The chain crosses the membrane as a helical span at residues Ile-426–Phe-446. An interaction with calmodulin region spans residues Tyr-445–Asp-457. Residues Leu-447 to Lys-519 lie on the Cytoplasmic side of the membrane. The interval Leu-447–Lys-519 is interaction with FLNA. Residues Gly-455–Lys-519 form a disordered region. Residues Ser-456–Pro-466 show a composition bias toward basic and acidic residues. The tract at residues Asp-484–Lys-519 is required for interaction with PTPN11 and PTPN6 and for control of phosphorylation level. Tyr-488 is subject to Phosphotyrosine; by SRC, LCK, INSR and EGFR. A compositionally biased stretch (polar residues) spans Ser-489 to Val-512. Ser-503 is subject to Phosphoserine. A Phosphotyrosine; by INSR, SRC and LCK modification is found at Tyr-513. Residues Tyr-513–Val-516 are essential for interaction with PTPN11 and PTPN6.

The protein belongs to the immunoglobulin superfamily. CEA family. In terms of assembly, monomer. Oligomer. Heterodimer. Homodimer. Cis-dimer/oligomer (via Ig-like C2-type and/or via cytoplasmic domains); induced by trans-homophilic cell adhesion through an allosteric mechanism transmitted by the Ig-like V-type domain, and is regulated by intracellular calcium and calmodulin. Interacts (via cytoplasmic domain) with calmodulin in a calcium dependent manner; reduces homophilic cell adhesion through dissociation of dimer. Isoform 1 interacts (via cytoplasmic domain) with PTPN11 (preferentially) and PTPN6; cis-homodimer form is preferred; this interaction is decreased by formation of isoform 1 / isoform 2 cis-heterodimers and is dependent on the monomer/dimer equilibrium; this interaction is phosphorylation-dependent. Isoform 1 interacts with LYN. Isoform 1 interacts (via cytoplasmic domain) with SRC (via SH2 domain); this interaction is regulated by trans-homophilic cell adhesion. Isoform 1 interacts (via cytoplasmic domain) with LCK; mediates phosphorylation at Tyr-488 and Tyr-513 resulting in PTPN6 association. Isoform 1 interacts with PTPN6; this interaction is phosphorylation-dependent and causes a profound decrease in TCR stimulation-induced CD247 and ZAP70 phosphorylation. Isoform 1 interacts with TCR/CD3 complex through TCR beta chain and CD3E; colocalizes at the cell surface and upon stimulation of the TCR/CD3 complex recruits PTPN6 in the TCR/CD3 complex, resulting in dephosphorylation of CD247 and ZAP70. Isoform 1 interacts (via cytoplasmic domain) with SHC1 (via SH2 domain); SHC1 mediates interaction with INSR or EGFR in a Ser-503 phosphorylation-dependent manner. Isoform 1 interacts with EGFR; the interaction is indirect. Isoform 1 interacts with CSF3R; down-regulates the CSF3R-STAT3 pathway through recruitment of PTPN6 that dephosphorylates CSF3R. Isoform 1 (phosphorylated form) interacts with TLR4 and SYK; recruits PTPN6 that dephosphorylates SYK, reducing the production of reactive oxygen species (ROS) and lysosome disruption, leading to a reduction of the inflammasome activity. Isoform 1 interacts with FLNA; inhibits cell migration and cell scattering by interfering with the interaction of FLNA with RALA. Isoform 1 interacts (via cytoplasmic domain) with PXN; the interaction is phosphotyrosyl-dependent. Isoform 1 interacts with KLRK1; recruits PTPN6 that dephosphorylates VAV1. Isoform 1 interacts with CEACAM8. Isoform 1 interacts with FASN; this interaction is insulin and phosphorylation-dependent; reduces fatty-acid synthase activity. Interacts (via Ig-like V-type) with HAVCR2 (via Ig-like V-type); facilitates the maturation and cell surface expression of HAVCR2 thereby regulating T-cell tolerance induction. Isoform 2 interacts (via the cytoplasmic domain) with ANXA2; this interaction is regulated by phosphorylation and appears in the AIIt complex. Interacts (via Lewis X moieties) with CD209 (via C-type lectin domain); this interaction is regulated by the glycosylation pattern of CEACAM1 on cell types and regulates contact between dendritic cells and neutrophils. Phosphorylated on serine and tyrosine. Isoform 1 is phosphorylated on tyrosine by Src family kinases like SRC and LCK and by receptor like CSF3R, EGFR and INSR upon stimulation. Phosphorylated at Ser-503; mediates activity. Phosphorylated at Tyr-488; regulates activity. Phosphorylated at Tyr-488 by EGFR and INSR upon stimulation; this phosphorylation is Ser-503-phosphorylation-dependent; mediates cellular internalization; increases interaction with FASN. Phosphorylated at Tyr-488 and Tyr-513 by LCK; mediates PTPN6 association and is regulated by homophilic ligation of CEACAM1 in the absence of T-cell activation. Phosphorylated at Tyr-513; mediates interaction with PTPN11. In terms of processing, phosphorylated on serine and threonine. Expressed in epithelia, vessel endothelia, leukocytes and platelets. Isoform 1 and isoform 2 are highly expressed in liver and intestine, moderately in lung, and weakly in muscle, kidney, and spleen. Expressed in granulocytes, lymphocytes, granulocytes, B cells, and T-cells.

It localises to the cell membrane. Its subcellular location is the lateral cell membrane. The protein localises to the apical cell membrane. The protein resides in the basal cell membrane. It is found in the cell junction. It localises to the adherens junction. Its subcellular location is the cytoplasmic vesicle. The protein localises to the secretory vesicle. The protein resides in the cell projection. It is found in the microvillus membrane. In terms of biological role, cell adhesion protein that mediates homophilic cell adhesion in a calcium-independent manner. Plays a role as coinhibitory receptor in immune response, insulin action and also functions as an activator during angiogenesis. Its coinhibitory receptor function is phosphorylation- and PTPN6 -dependent, which in turn, suppress signal transduction of associated receptors by dephosphorylation of their downstream effectors. Plays a role in immune response, of T-cells, natural killer (NK) and neutrophils. Upon TCR/CD3 complex stimulation, inhibits TCR-mediated cytotoxicity by blocking granule exocytosis by mediating homophilic binding to adjacent cells, allowing interaction with and phosphorylation by LCK and interaction with the TCR/CD3 complex which recruits PTPN6 resulting in dephosphorylation of CD247 and ZAP70. Also inhibits T-cell proliferation and cytokine production through inhibition of JNK cascade and plays a crucial role in regulating autoimmunity and anti-tumor immunity by inhibiting T-cell through its interaction with HAVCR2. Upon natural killer (NK) cells activation, inhibit KLRK1-mediated cytolysis of CEACAM1-bearing tumor cells by trans-homophilic interactions with CEACAM1 on the target cell and lead to cis-interaction between CEACAM1 and KLRK1, allowing PTPN6 recruitment and then VAV1 dephosphorylation. Upon neutrophils activation negatively regulates IL1B production by recruiting PTPN6 to a SYK-TLR4-CEACAM1 complex, that dephosphorylates SYK, reducing the production of reactive oxygen species (ROS) and lysosome disruption, which in turn, reduces the activity of the inflammasome. Down-regulates neutrophil production by acting as a coinhibitory receptor for CSF3R by downregulating the CSF3R-STAT3 pathway through recruitment of PTPN6 that dephosphorylates CSF3R. Also regulates insulin action by promoting INS clearance and regulating lipogenesis in liver through regulating insulin signaling. Upon INS stimulation, undergoes phosphorylation by INSR leading to INS clearance by increasing receptor-mediated insulin endocytosis. This inernalization promotes interaction with FASN leading to receptor-mediated insulin degradation and to reduction of FASN activity leading to negative regulation of fatty acid synthesis. INSR-mediated phosphorylation also provokes a down-regulation of cell proliferation through SHC1 interaction resulting in decrease coupling of SHC1 to the MAPK3/ERK1-MAPK1/ERK2 and phosphatidylinositol 3-kinase pathways. Functions as activator in angiogenesis by promoting blood vessel remodeling through endothelial cell differentiation and migration and in arteriogenesis by increasing the number of collateral arteries and collateral vessel calibers after ischemia. Also regulates vascular permeability through the VEGFR2 signaling pathway resulting in control of nitric oxide production. Down-regulates cell growth in response to EGF through its interaction with SHC1 that mediates interaction with EGFR resulting in decrease coupling of SHC1 to the MAPK3/ERK1-MAPK1/ERK2 pathway. Negatively regulates platelet aggregation by decreasing platelet adhesion on type I collagen through the GPVI-FcRgamma complex. Inhibits cell migration and cell scattering through interaction with FLNA; interferes with the interaction of FLNA with RALA. Mediates bile acid transport activity in a phosphorylation dependent manner. Negatively regulates osteoclastogenesis. Functionally, cell adhesion proteins that mediates homophilic cell adhesion in a calcium-independent manner. Promotes populations of T-cells regulating IgA production and secretion associated with control of the commensal microbiota and resistance to enteropathogens. This chain is Cell adhesion molecule CEACAM1, found in Rattus norvegicus (Rat).